The primary structure comprises 314 residues: MSKFLLNRCIRDLSPLTVLKDNLQQTAKPILNYYAKNAASRGIKVLFISYETLEKEAPEGIDCFLYATSWEKVKSLKELYEHISSWRTQGKQHIVMIDTINPILNTSISSFTMFFGSVLALGSICFLTSFHKDVTLENYPSYLPPCEVFLDFTSTCTVSLIGMQHLSVEHDAKMRSLPNPLLEELQDDKIISLLGSNCETAIVLHVEFRKKSGRIIKESCVLKNGKLEPYTPFEETARGPEPADNQIDFNVSFNLNVSEKERKERDKVFLPYFSAQMVGSQHKSSFVDEGTIIYHADEADDFDEEEDADEDLLI.

Belongs to the ELP5 family. Component of the elongator complex.

Its subcellular location is the cytoplasm. It is found in the nucleus. Its pathway is tRNA modification; 5-methoxycarbonylmethyl-2-thiouridine-tRNA biosynthesis. Functionally, component of the elongator complex, a multiprotein complex which is required for multiple tRNA modifications, including mcm5U (5-methoxycarbonylmethyl uridine), mcm5s2U (5-methoxycarbonylmethyl-2-thiouridine), and ncm5U (5-carbamoylmethyl uridine). The elongator complex catalyzes formation of carboxymethyluridine in the wobble base at position 34 in tRNAs. This is Elongator complex protein 5 (iki1) from Schizosaccharomyces pombe (strain 972 / ATCC 24843) (Fission yeast).